A 337-amino-acid polypeptide reads, in one-letter code: uncharacterized protein (337 aa).

Helical transmembrane passes span F4 to I24 and L26 to L46.

The protein belongs to the plectrovirus ORF2 family.

It is found in the host membrane. This is an uncharacterized protein from Spiroplasma melliferum (SpV1).